The sequence spans 331 residues: 6-phosphogluconolactonase (331 aa).

Lys-287 is modified (N6-acetyllysine).

It belongs to the cycloisomerase 2 family.

It catalyses the reaction 6-phospho-D-glucono-1,5-lactone + H2O = 6-phospho-D-gluconate + H(+). The protein operates within carbohydrate degradation; pentose phosphate pathway; D-ribulose 5-phosphate from D-glucose 6-phosphate (oxidative stage): step 2/3. Catalyzes the hydrolysis of 6-phosphogluconolactone to 6-phosphogluconate. In Escherichia coli O7:K1 (strain IAI39 / ExPEC), this protein is 6-phosphogluconolactonase.